Here is a 180-residue protein sequence, read N- to C-terminus: Chromosome-anchoring protein RacA (180 aa).

The H-T-H motif DNA-binding region spans 5 to 25; it reads TPFIAKKLGVSPKAVVRIAQQ. A coiled-coil region spans residues 67 to 151; that stretch reads KASSNEVEEL…LEAALTKEEP (85 aa).

Belongs to the RacA family.

The protein localises to the cytoplasm. Its function is as follows. Required for the formation of axial filaments and for anchoring the origin regions at the cell poles in sporulating cells, thus ensuring proper chromosome segregation in the prespore. Binds in a dispersed manner throughout the chromosome but preferentially to sites clustered in the origin portion of the chromosome, causing condensation of the chromosome and its remodeling into an elongated, anchored structure. The sequence is that of Chromosome-anchoring protein RacA from Bacillus cereus (strain B4264).